The following is a 278-amino-acid chain: Orotidine 5'-phosphate decarboxylase (278 aa).

K96 serves as the catalytic Proton donor.

Belongs to the OMP decarboxylase family. Type 2 subfamily.

The enzyme catalyses orotidine 5'-phosphate + H(+) = UMP + CO2. The protein operates within pyrimidine metabolism; UMP biosynthesis via de novo pathway; UMP from orotate: step 2/2. The sequence is that of Orotidine 5'-phosphate decarboxylase (pyrF) from Streptomyces coelicolor (strain ATCC BAA-471 / A3(2) / M145).